The chain runs to 279 residues: 2-dehydro-3-deoxyphosphooctonate aldolase (279 aa).

The protein belongs to the KdsA family.

It is found in the cytoplasm. The enzyme catalyses D-arabinose 5-phosphate + phosphoenolpyruvate + H2O = 3-deoxy-alpha-D-manno-2-octulosonate-8-phosphate + phosphate. Its pathway is carbohydrate biosynthesis; 3-deoxy-D-manno-octulosonate biosynthesis; 3-deoxy-D-manno-octulosonate from D-ribulose 5-phosphate: step 2/3. The protein operates within bacterial outer membrane biogenesis; lipopolysaccharide biosynthesis. In Bartonella henselae (strain ATCC 49882 / DSM 28221 / CCUG 30454 / Houston 1) (Rochalimaea henselae), this protein is 2-dehydro-3-deoxyphosphooctonate aldolase.